A 615-amino-acid polypeptide reads, in one-letter code: 1-deoxy-D-xylulose-5-phosphate synthase (615 aa).

Thiamine diphosphate is bound by residues histidine 72 and 111–113 (GHS). Aspartate 142 lines the Mg(2+) pocket. Thiamine diphosphate is bound by residues 143–144 (GA), asparagine 171, tyrosine 278, and glutamate 360. Asparagine 171 contributes to the Mg(2+) binding site.

It belongs to the transketolase family. DXPS subfamily. Homodimer. Mg(2+) serves as cofactor. It depends on thiamine diphosphate as a cofactor.

It catalyses the reaction D-glyceraldehyde 3-phosphate + pyruvate + H(+) = 1-deoxy-D-xylulose 5-phosphate + CO2. It functions in the pathway metabolic intermediate biosynthesis; 1-deoxy-D-xylulose 5-phosphate biosynthesis; 1-deoxy-D-xylulose 5-phosphate from D-glyceraldehyde 3-phosphate and pyruvate: step 1/1. Its function is as follows. Catalyzes the acyloin condensation reaction between C atoms 2 and 3 of pyruvate and glyceraldehyde 3-phosphate to yield 1-deoxy-D-xylulose-5-phosphate (DXP). This Campylobacter jejuni (strain RM1221) protein is 1-deoxy-D-xylulose-5-phosphate synthase.